The sequence spans 66 residues: Large ribosomal subunit protein bL35 (66 aa).

It belongs to the bacterial ribosomal protein bL35 family.

This is Large ribosomal subunit protein bL35 from Afipia carboxidovorans (strain ATCC 49405 / DSM 1227 / KCTC 32145 / OM5) (Oligotropha carboxidovorans).